A 214-amino-acid chain; its full sequence is tRNA (guanine-N(7)-)-methyltransferase (214 aa).

The S-adenosyl-L-methionine site is built by glutamate 43, glutamate 68, aspartate 95, and aspartate 117. Aspartate 117 is a catalytic residue. Substrate contacts are provided by residues lysine 121, aspartate 153, and 190–193; that span reads TEYE.

The protein belongs to the class I-like SAM-binding methyltransferase superfamily. TrmB family.

The catalysed reaction is guanosine(46) in tRNA + S-adenosyl-L-methionine = N(7)-methylguanosine(46) in tRNA + S-adenosyl-L-homocysteine. It participates in tRNA modification; N(7)-methylguanine-tRNA biosynthesis. Its function is as follows. Catalyzes the formation of N(7)-methylguanine at position 46 (m7G46) in tRNA. The protein is tRNA (guanine-N(7)-)-methyltransferase of Staphylococcus aureus (strain COL).